We begin with the raw amino-acid sequence, 4244 residues long: Tenascin-X (4244 aa).

Residues 1 to 23 (MMPAQYALTSSLVLLVLLSTARA) form the signal peptide. Positions 27–57 (SSRSNVTLPAPRPPPQPGGHTVGAGVGSPSS) are disordered. Residue asparagine 31 is glycosylated (N-linked (GlcNAc...) asparagine). In terms of domain architecture, EGF-like 1; incomplete spans 156 to 168 (CSCEPGWGGPTCS). Residues 169 to 189 (DPTDAEIPPSSPPSASGSCPD) are disordered. EGF-like domains lie at 183-213 (ASGS…GPSC), 214-244 (GWPS…GPDC), 245-275 (SQRS…GDDC), 276-306 (GMRS…GEDC), 307-337 (GVRS…GEDC), 338-368 (GTRS…GEDC), 369-399 (STRT…GDDC), 400-430 (GVRS…GTDC), 431-461 (GSRA…GEDC), 462-492 (GVRS…GRDC), 493-523 (GTRA…GEDC), 524-554 (GSRR…GEDC), 555-585 (STRS…GEDC), 586-616 (GVRQ…SEDC), 617-647 (SIRT…GPTC), 648-679 (ATRM…EDCG), 684-714 (PASA…GPDC), and 715-746 (AIQT…EDCG). Disulfide bonds link cysteine 187-cysteine 197, cysteine 191-cysteine 202, cysteine 204-cysteine 213, cysteine 218-cysteine 228, cysteine 222-cysteine 233, cysteine 235-cysteine 244, cysteine 249-cysteine 259, cysteine 253-cysteine 264, cysteine 266-cysteine 275, cysteine 280-cysteine 290, cysteine 284-cysteine 295, cysteine 297-cysteine 306, cysteine 311-cysteine 321, cysteine 315-cysteine 326, cysteine 328-cysteine 337, cysteine 342-cysteine 352, cysteine 346-cysteine 357, cysteine 359-cysteine 368, cysteine 373-cysteine 383, cysteine 377-cysteine 388, cysteine 390-cysteine 399, cysteine 404-cysteine 414, cysteine 408-cysteine 419, cysteine 421-cysteine 430, cysteine 435-cysteine 445, cysteine 439-cysteine 450, cysteine 452-cysteine 461, cysteine 466-cysteine 476, cysteine 470-cysteine 481, cysteine 483-cysteine 492, cysteine 497-cysteine 507, cysteine 501-cysteine 512, cysteine 514-cysteine 523, cysteine 528-cysteine 538, cysteine 532-cysteine 543, cysteine 545-cysteine 554, cysteine 559-cysteine 569, cysteine 563-cysteine 574, cysteine 576-cysteine 585, cysteine 590-cysteine 600, cysteine 594-cysteine 605, cysteine 607-cysteine 616, cysteine 621-cysteine 631, cysteine 625-cysteine 636, cysteine 638-cysteine 647, cysteine 652-cysteine 662, cysteine 656-cysteine 667, cysteine 669-cysteine 678, cysteine 688-cysteine 698, cysteine 692-cysteine 703, cysteine 705-cysteine 714, cysteine 719-cysteine 729, cysteine 723-cysteine 734, and cysteine 736-cysteine 745. The segment at 926–956 (TGSSPLGLLGTTDEPPPSGPSTTQGAQAPLL) is disordered. Fibronectin type-III domains lie at 959–1051 (RPQE…IMDK), 1064–1153 (RLGE…PQSD), 1161–1249 (HLGN…APER), 1263–1352 (LLGE…PQED), 1374–1468 (LLGE…TPPA), 1476–1572 (RLGE…TEAS), 1574–1669 (PPLE…RGDA), 1674–1764 (PPRL…ARSA), 1778–1868 (LGEE…REET), and 1883–1971 (HLGE…VPEE). Positions 1340–1372 (PESVVAKTAPQEDVDETPSPTELGTEAPESPEE) are disordered. Residues 1666–1668 (RGD) carry the Cell attachment site motif. A disordered region spans residues 1752–1777 (PLTADGTTEARSAMDDTGTKRPPKPR). A disordered region spans residues 1968–1990 (VPEEEKPSEPPTATPEPPIKPRL). Over residues 1976–1987 (EPPTATPEPPIK) the composition is skewed to pro residues. 5 Fibronectin type-III domains span residues 1989–2089 (RLGE…SMEA), 2097–2185 (LLGE…APEE), 2196–2296 (RLGQ…TEPP), 2305–2398 (RLEE…TPSP), and 2408–2502 (PPEE…PQED). Positions 2281–2304 (APGKDEEMAPASTEPPTPEPPIKP) are disordered. Residues 2495-2542 (GVTAPQEDVDETPSPTEPGTEAPGPPEEPLLGELTVTGSSPDSLSLSW) are disordered. Low complexity predominate over residues 2506 to 2516 (TPSPTEPGTEA). 15 consecutive Fibronectin type-III domains span residues 2519–2617 (PPEE…TTQA), 2625–2723 (PPIK…TPSP), 2733–2840 (PPEE…TTPE), 2841–2939 (PPNK…TPAP), 2949–3042 (PPEE…APKD), 3062–3153 (RLGE…TPSP), 3168–3260 (LLGE…TPLP), 3264–3355 (RLGE…TKPS), 3357–3446 (RLGE…PLEK), 3451–3544 (HLGE…TPAP), 3553–3647 (PPEE…LAPA), 3657–3754 (RLSQ…TLSP), 3758–3847 (SPRD…VPDG), 3848–3934 (PTQL…TGLE), and 3935–4025 (APRD…LRIP). Polar residues predominate over residues 2530 to 2542 (VTGSSPDSLSLSW). Disordered stretches follow at residues 2824 to 2847 (PEDE…KPRL) and 2933 to 2969 (EEET…DSLS). Positions 2937 to 2946 (PAPTEPSTEA) are enriched in low complexity. The segment covering 2960–2969 (VTGSSPDSLS) has biased composition (polar residues). Disordered stretches follow at residues 3536 to 3559 (APEE…EPRL) and 3636 to 3662 (LSAE…SQLS). Asparagine 3855, asparagine 3908, and asparagine 3920 each carry an N-linked (GlcNAc...) asparagine glycan. Residues 4021–4236 (GLRIPFPRDC…FTEMKLRPRN (216 aa)) form the Fibrinogen C-terminal domain. A disulfide bridge links cysteine 4030 with cysteine 4060. An N-linked (GlcNAc...) asparagine glycan is attached at asparagine 4095. Residues cysteine 4182 and cysteine 4195 are joined by a disulfide bond.

The protein belongs to the tenascin family. As to quaternary structure, homotrimer. Interacts with type I, III and V collagens and tropoelastin via its 29th fibronectin type-III domain. In terms of tissue distribution, highly expressed in fetal adrenal, in fetal testis, fetal smooth, striated and cardiac muscle. Isoform XB-short is only expressed in the adrenal gland.

The protein localises to the secreted. It is found in the extracellular space. Its subcellular location is the extracellular matrix. Its function is as follows. Appears to mediate interactions between cells and the extracellular matrix. Substrate-adhesion molecule that appears to inhibit cell migration. Accelerates collagen fibril formation. May play a role in supporting the growth of epithelial tumors. The polypeptide is Tenascin-X (Homo sapiens (Human)).